A 200-amino-acid chain; its full sequence is High mobility group protein 1 homolog (200 aa).

DNA-binding regions (HMG box) lie at residues Pro-11–Lys-81 and Pro-100–Lys-168. A compositionally biased stretch (basic and acidic residues) spans Glu-64–Glu-86. Disordered regions lie at residues Glu-64–Asn-103 and Ala-169–Asp-200. Positions Ser-190–Asp-200 are enriched in acidic residues.

It belongs to the HMGB family.

It localises to the nucleus. The protein localises to the chromosome. Its function is as follows. Binds preferentially single-stranded DNA and unwinds double-stranded DNA. This is High mobility group protein 1 homolog (HMG1) from Strongylocentrotus purpuratus (Purple sea urchin).